The primary structure comprises 485 residues: E3 ubiquitin-protein ligase TRIM34B (485 aa).

The RING-type zinc finger occupies 15-58 (CPVCQELLTKALSLGCGHLVCQACLISNKNAVINPRGKSSCPVC). The B box-type zinc finger occupies 91–127 (TKRDLCVHHGEKLLLFCKEDKKVICWVCERSQEHRGH). Zn(2+) contacts are provided by Cys96, His99, Cys118, and His124. The stretch at 136 to 170 (VRECQENLQKALTRLRKEQEKVETLEADIKEDRLS) forms a coiled coil. Positions 282 to 485 (LSGMLQKFRE…APMTLCPLNS (204 aa)) constitute a B30.2/SPRY domain.

This sequence belongs to the TRIM/RBCC family. As to quaternary structure, homotrimer. Interacts (via B-box and SPRY domain) with TRIM5.

The protein localises to the cytoplasm. It localises to the mitochondrion. It carries out the reaction S-ubiquitinyl-[E2 ubiquitin-conjugating enzyme]-L-cysteine + [acceptor protein]-L-lysine = [E2 ubiquitin-conjugating enzyme]-L-cysteine + N(6)-ubiquitinyl-[acceptor protein]-L-lysine.. The protein operates within protein modification; protein ubiquitination. Functions as antiviral protein and contributes to the defense against retroviral infections. Acts as a capsid-specific restriction factor with the help of TRIM5 and prevents infection from non-host-adapted retroviruses. During influenza A virus infection, promotes programmed cell death by targeting ZBP1 for 'Lys-63'-linked polyubiquitination. In turn, promotes ZBP1 recruitment of RIPK3 to mediate virus-induced programmed necrosis. Negatively regulates the function of mitochondria by enhancing mitochondrial depolarization leading to cytochrome c release and mitochondria-dependent apoptosis. Also promotes the formation of multinucleated giant cells by means of cell fusion and phagocytosis in epithelial cells. Regulates intestinal inflammation by controlling the exocytosis of the major component of colonic mucus MUC2 from colonic goblet cells. This is E3 ubiquitin-protein ligase TRIM34B from Mus musculus (Mouse).